The following is a 673-amino-acid chain: Probable serine/threonine-protein kinase SCO3848 (673 aa).

The 267-residue stretch at 11-277 (YELGPVLGRG…EMRVDIEACL (267 aa)) folds into the Protein kinase domain. Residues 17-25 (LGRGGMAEV) and Lys-40 contribute to the ATP site. Residue Asp-138 is the Proton acceptor of the active site. Positions 302–345 (DQPTTALRSDGGGGATTMLPPMNPDDGGYGYDERPDRRRQQPRK) are disordered. PASTA domains follow at residues 379-445 (GNDK…VVST), 446-511 (GAPK…EVAK), 512-580 (AEEK…VVGK), and 581-649 (AVEK…MTVP). Positions 472 to 500 (FEVETKQTESSQDEGTILSQNPDPGKELE) are disordered. Residues 479-493 (TESSQDEGTILSQNP) show a composition bias toward polar residues. Disordered regions lie at residues 613–641 (AQGS…PAAT) and 653–673 (GNGN…GFGD).

It belongs to the protein kinase superfamily. Ser/Thr protein kinase family.

The catalysed reaction is L-seryl-[protein] + ATP = O-phospho-L-seryl-[protein] + ADP + H(+). It carries out the reaction L-threonyl-[protein] + ATP = O-phospho-L-threonyl-[protein] + ADP + H(+). The chain is Probable serine/threonine-protein kinase SCO3848 from Streptomyces coelicolor (strain ATCC BAA-471 / A3(2) / M145).